The sequence spans 384 residues: ATP phosphoribosyltransferase regulatory subunit (384 aa).

Belongs to the class-II aminoacyl-tRNA synthetase family. HisZ subfamily. Heteromultimer composed of HisG and HisZ subunits.

It is found in the cytoplasm. Its pathway is amino-acid biosynthesis; L-histidine biosynthesis; L-histidine from 5-phospho-alpha-D-ribose 1-diphosphate: step 1/9. Functionally, required for the first step of histidine biosynthesis. May allow the feedback regulation of ATP phosphoribosyltransferase activity by histidine. The protein is ATP phosphoribosyltransferase regulatory subunit of Paracidovorax citrulli (strain AAC00-1) (Acidovorax citrulli).